We begin with the raw amino-acid sequence, 628 residues long: Otolith matrix protein OMM-64 (628 aa).

The N-terminal stretch at 1–20 (MLSRLLIVPLIFALAGLAIS) is a signal peptide. The interval 43 to 628 (KGDKDGGGLT…AAATALAAQS (586 aa)) is disordered. Positions 78–93 (DSSPDTTDTPDASSSD) are enriched in low complexity. A compositionally biased stretch (polar residues) spans 182–214 (TESPGSDSAESPGSDSAESPGSDSTESPGSDST). 3 stretches are compositionally biased toward basic and acidic residues: residues 246–266 (ETDKDDDKSDDKSDADAATDK), 276–285 (ELDGKAHAED), and 311–343 (RPEKDVKNDSDDSKDTTEDDKPDKDDKKNRDSA). A glycan (N-linked (GlcNAc...) asparagine) is linked at Asn318. 5 stretches are compositionally biased toward acidic residues: residues 449 to 462 (DSQEDSVDESEAEP), 477 to 489 (EPQEDDSEEDTDD), 514 to 536 (DKEDMDKDDMDKDDMDKDDMDKD), 544 to 556 (DSVDDQSESDAEP), and 565 to 578 (DEIDGEETMTPDSE). A compositionally biased stretch (low complexity) spans 613 to 628 (ASQAADAAATALAAQS).

In terms of tissue distribution, specifically expressed in otolith matrix-producing cells.

It localises to the secreted. Its subcellular location is the extracellular space. The protein resides in the extracellular matrix. Functionally, calcium-binding component of otoliths, a calcium carbonate structure of the inner ear involved in hearing and balance sensing. Binds calcium. This is Otolith matrix protein OMM-64 from Oncorhynchus mykiss (Rainbow trout).